Consider the following 485-residue polypeptide: Peroxisomal catalase (485 aa).

Active-site residues include His-53 and Asn-126. Heme is bound at residue Tyr-336.

This sequence belongs to the catalase family. In terms of assembly, homotetramer. Heme is required as a cofactor.

It localises to the peroxisome matrix. It carries out the reaction 2 H2O2 = O2 + 2 H2O. Its function is as follows. Catalyzes the degradation of hydrogen peroxide (H(2)O(2)) generated by peroxisomal oxidases to water and oxygen, thereby protecting cells from the toxic effects of hydrogen peroxide. The protein is Peroxisomal catalase (CAT1) of Candida albicans (strain SC5314 / ATCC MYA-2876) (Yeast).